Reading from the N-terminus, the 584-residue chain is Arginine--tRNA ligase (584 aa).

The short motif at Ala129–His139 is the 'HIGH' region element.

The protein belongs to the class-I aminoacyl-tRNA synthetase family. As to quaternary structure, monomer.

The protein localises to the cytoplasm. It carries out the reaction tRNA(Arg) + L-arginine + ATP = L-arginyl-tRNA(Arg) + AMP + diphosphate. This chain is Arginine--tRNA ligase, found in Halorhodospira halophila (strain DSM 244 / SL1) (Ectothiorhodospira halophila (strain DSM 244 / SL1)).